The chain runs to 228 residues: Isonitrile hydratase (228 aa).

C101 is a catalytic residue.

As to quaternary structure, homodimer.

The catalysed reaction is N-cyclohexylformamide = cyclohexyl isocyanide + H2O. Sensitive to thiol reagents and oxidizing reagents, but is not influenced by chelators or reducing reagents. In terms of biological role, catalyzes the hydration of cyclohexyl isocyanide to N-cyclohexylformamide. Acts on various isonitriles, but not on nitriles or amides. Probably involved in detoxification. The protein is Isonitrile hydratase (inhA) of Pseudomonas putida (Arthrobacter siderocapsulatus).